The chain runs to 108 residues: uncharacterized protein (108 aa).

In terms of domain architecture, HTH hxlR-type spans 7-106; it reads CPRFEKAVDI…WATEWIDPSF (100 aa).

This is an uncharacterized protein from Bacillus subtilis (strain 168).